A 2118-amino-acid polypeptide reads, in one-letter code: MRNFKGVNFATLLCSKEETQQLLPDLKEFLSRSRTDFPSSRTDAERRQICDTILRACTQQLTAKLDCPGHLRSILDLAELACDGYLLSTPQRPPLYLERILFILLRNGSTQGSPDTVLRLAQPLHACLVQNSGEAAPQDYEAVTRGSFSLFWKGAEALLERRAAFSTRLNALSFLVLLEDGSVPCEVPHFASPTACRLVAAYQLYDATGQGLDEADADFLYEVLSRHLIRVLVGEGGSSPGPLSPQRALCLLEITLEHCRRLCWNHHHRQAARAVERARNHLEKTSVAPSLQLCQMGVELLEAVEERPGAVAQLLRKAAAVLINSIEAPSPPLRALYDSCQFFLSGLERGIRRHCGLDAILSLFAFLGGYSSLVRHLREVSEASSKQQQCLLQMHFQGFHLFTGIVYDFAQGCQATELAQLVDGCRSAAVWMLEALEGLSGGELADYLSMTASYTSNLAYSFFSQKLYEEACVISEPVCQHLGSATSGACPEVPPEKLHRCFRLHVESLKKLGKQAQGCKMVTLWLAALKPYSLEHMVEPVTFWVRVKMDASRAGDKELQLQTLRDSLSCWDPETQSLLLREELRAYKSVRADTGQERFNIICDLLELSPEETAAGAWARATYLVELAQVLCYHNFTQQTNCSALDAVQEALQLLESVSPEAQEQDRLLDDKAQALLWLYICTLEAKMQEGIERDRRAQAPSNLEEFEVNDLNYEDKLQEDRFLYSSIAFNLAADAAQSKCLDQALTLWKEVLTKGRAPAVRCLQQTAASLQILAAVYQLVAKPLQALETLLLLQIVSKRLQDHAKAASSSCQLTQLLLNLGCPSYAQLYLEEAESSLRSLDQTSDACQLLSLTCALLGSQLCWACQKVTAGVSLLLSVLRDPALQKSSKAWYLLRVQALQVLAFYLSLSSNLLSSALREQLWDQGWQTPETALIDAHKLLRSIIILLMGSDVLSIQKAATESPFLDYGENLVQKWQVLTEVLTCSERLVGRLGRLGNVSEAKAFCLEALKLTTKLQIPRQCALFLVLKGELELARGDIDLCQSDLQQVLFLLESSTEFGVVTQHPDSVKKVHTQKGKHKAQGPCFPPLSEEEPFLKGPALELVDTVLNEPGPIQSSVNSSPVLKTKPPPNPGFLSHLPSCDCLLCASPALSAVCLRWVLVTAGVRLATGHKAQGLDLLQAVLTRCPAATKRFTQSLQASLNHRTTPSCVPSLFDEIMAQVYTHLALEFLNQTSEKSLGKVLASGLKFVATRIQSLEIWRAHLLLVQALAKLAHFSCCTSELFASSWGWHPPLVKSLPVLEPAKIRRQKCSGRGRRRIASVPPPLHNSSQKGLEEEGPPCTPKPPGRARQAGPRVPFTIFEEVHPTKSKLQVPLAPRVHRRAQTRLKVIFSDDSDLEDLVSADTQLVEEPKRRGTASRTRGQTRKGRSLKTDAVVAIESTPGHSSVSGRTRRARKVASRNCEEESPKAPLCVWASQGPEIMRSIPEEEPVDNHLEKSFEILRGSDGEDSASGEKAAAADTGLPVGECEVLRRDSSKAERPVLYSDTEANSDPSPWLPPFSVPAPIDLSTLDSISDSLSIAFRGVSHCPPSGLYAHLCRFLALCLGHRDPYATAFLVAESISITCRHQLLTHLHRQLSKAQKQQESPELAEHLQRLDLKERPGGVPLARIQRLFSFKALGSGCFPQAEKESFQERLALIPSGVTVCVLALATLQPGTLSNTLLLTRLEKDNPPITVKIPTAQNKLPLSAVLKEFDAIQKDQKENSSCTEKRVWWTGRLALDQRMEALITALEEQVLGCWRGLLLPCSADPSLAQEASKLQELLRECGWEYPDSTLLKVILSGARILTSQDVQALACGLCPAQPDRAQVLLSEAVGQVQSQEAPRSQHLVLVLDKDLQKLPWESTPILQAQPVTRLPSFRFLLSYTVTKEAGASSVLSQGVDPQNTFYVLNPHSNLSSTEERFRASFSSETGWKGVIGEVPSLDQVQAALTERDLYIYAGHGAGARFLDGQAVLRLSCRAVALLFGCSSAALAVHGNLEGAGIVLKYIMAGCPLFLGNLWDVTDRDIDRYTEALLQGWLGAGPGAPFLYYASQARQAPRLKYLIGAAPVAYGLPISLQTP.

Residue Ser1121 is modified to Phosphoserine. Basic residues predominate over residues 1309–1318 (KCSGRGRRRI). The disordered stretch occupies residues 1309–1352 (KCSGRGRRRIASVPPPLHNSSQKGLEEEGPPCTPKPPGRARQAG). Residues Ser1391 and Ser1394 each carry the phosphoserine modification. Residues 1408-1428 (EEPKRRGTASRTRGQTRKGRS) are disordered. Residue Ser1504 is modified to Phosphoserine. Positions 1941–2036 (PQNTFYVLNP…SAALAVHGNL (96 aa)) constitute a Peptidase C50 domain. The active site involves Cys2025.

As to quaternary structure, interacts with PTTG1. Interacts with RAD21. Autocleaves. This function, which is not essential for its protease activity, is unknown. In terms of processing, phosphorylated by CDK1. There is 8 Ser/Thr phosphorylation sites. Among them, only Ser-1121 phosphorylation is the major site, which conducts to the enzyme inactivation.

It is found in the cytoplasm. The protein resides in the nucleus. The enzyme catalyses All bonds known to be hydrolyzed by this endopeptidase have arginine in P1 and an acidic residue in P4. P6 is often occupied by an acidic residue or by a hydroxy-amino-acid residue, the phosphorylation of which enhances cleavage.. With respect to regulation, regulated by at least two independent mechanisms. First, it is inactivated via its interaction with securin/PTTG1, which probably covers its active site. The association with PTTG1 is not only inhibitory, since PTTG1 is also required for activating it, the enzyme being inactive in cells in which PTTG1 is absent. PTTG1 degradation at anaphase, liberates it and triggers RAD21 cleavage. Second, phosphorylation at Ser-1121 inactivates it. The complete phosphorylation during mitosis, is removed when cells undergo anaphase. Activation of the enzyme at the metaphase-anaphase transition probably requires the removal of both securin and inhibitory phosphate. Caspase-like protease, which plays a central role in the chromosome segregation by cleaving the SCC1/RAD21 subunit of the cohesin complex at the onset of anaphase. During most of the cell cycle, it is inactivated by different mechanisms. In Mus musculus (Mouse), this protein is Separin (Espl1).